Consider the following 229-residue polypeptide: Putative N-acetylmannosamine-6-phosphate 2-epimerase (229 aa).

This sequence belongs to the NanE family.

The catalysed reaction is an N-acyl-D-glucosamine 6-phosphate = an N-acyl-D-mannosamine 6-phosphate. It participates in amino-sugar metabolism; N-acetylneuraminate degradation; D-fructose 6-phosphate from N-acetylneuraminate: step 3/5. Converts N-acetylmannosamine-6-phosphate (ManNAc-6-P) to N-acetylglucosamine-6-phosphate (GlcNAc-6-P). This Pediococcus pentosaceus (strain ATCC 25745 / CCUG 21536 / LMG 10740 / 183-1w) protein is Putative N-acetylmannosamine-6-phosphate 2-epimerase.